The chain runs to 676 residues: Methionine--tRNA ligase (676 aa).

The short motif at 15 to 25 (PYANGPIHLGH) is the 'HIGH' region element. The Zn(2+) site is built by cysteine 146, cysteine 149, cysteine 159, and cysteine 162. Positions 332 to 336 (KMSKS) match the 'KMSKS' region motif. Lysine 335 contacts ATP. The 102-residue stretch at 575-676 (DFAKIDLRIA…EGAQPGMRVK (102 aa)) folds into the tRNA-binding domain.

It belongs to the class-I aminoacyl-tRNA synthetase family. MetG type 1 subfamily. In terms of assembly, homodimer. Requires Zn(2+) as cofactor.

It localises to the cytoplasm. It carries out the reaction tRNA(Met) + L-methionine + ATP = L-methionyl-tRNA(Met) + AMP + diphosphate. In terms of biological role, is required not only for elongation of protein synthesis but also for the initiation of all mRNA translation through initiator tRNA(fMet) aminoacylation. The sequence is that of Methionine--tRNA ligase from Shewanella sp. (strain ANA-3).